The sequence spans 299 residues: uncharacterized protein (299 aa).

The protein belongs to the glycosyltransferase 2 family.

This is an uncharacterized protein from Mycoplasma pneumoniae (strain ATCC 29342 / M129 / Subtype 1) (Mycoplasmoides pneumoniae).